Here is a 44-residue protein sequence, read N- to C-terminus: Photosystem I reaction center subunit IX (44 aa).

A helical transmembrane segment spans residues 9-29 (WFRSAPVVATIWIVLTAGILV).

It belongs to the PsaJ family.

It localises to the cellular thylakoid membrane. May help in the organization of the PsaE and PsaF subunits. The sequence is that of Photosystem I reaction center subunit IX from Prochlorococcus marinus (strain MIT 9211).